Here is a 352-residue protein sequence, read N- to C-terminus: MEGISIYTSDNYTEEMGSGDYDSIKEPCFREENAHFNRIFLPTIYSIIFLTGIVGNGLVILVMGYQKKLRSMTDKYRLHLSVADLLFVITLPFWAVDAVANWYFGNFLCKAVHVIYTVNLYSSVLILAFISLDRYLAIVHATNSQRPRKLLAEKVVYVGVWIPALLLTIPDFIFASVSEADDRYICDRFYPNDLWVVVFQFQHIMVGLILPGIVILSCYCIIISKLSHSKGHQKRKALKTTVILILAFFACWLPYYIGISIDSFILLEIIKQGCEFENTVHKWISITEALAFFHCCLNPILYAFLGAKFKTSAQHALTSVSRGSSLKILSKGKRGGHSSVSTESESSSFHSS.

The segment at 1–21 is important for chemokine binding and signaling; sequence MEGISIYTSDNYTEEMGSGDY. The Extracellular portion of the chain corresponds to 1–38; that stretch reads MEGISIYTSDNYTEEMGSGDYDSIKEPCFREENAHFNR. Tyr7 bears the Sulfotyrosine mark. N-linked (GlcNAc...) asparagine glycosylation is present at Asn11. Tyr12 bears the Sulfotyrosine mark. Ser18 carries an O-linked (Xyl...) (chondroitin sulfate) serine glycan. Tyr21 carries the sulfotyrosine modification. 2 disulfides stabilise this stretch: Cys28–Cys274 and Cys109–Cys186. A helical membrane pass occupies residues 39-63; sequence IFLPTIYSIIFLTGIVGNGLVILVM. Over 64–77 the chain is Cytoplasmic; sequence GYQKKLRSMTDKYR. Residues 78–99 traverse the membrane as a helical segment; that stretch reads LHLSVADLLFVITLPFWAVDAV. The interval 94–97 is chemokine binding; the sequence is WAVD. Residues 100–110 are Extracellular-facing; the sequence is ANWYFGNFLCK. Residues 111-130 form a helical membrane-spanning segment; it reads AVHVIYTVNLYSSVLILAFI. The tract at residues 113 to 117 is chemokine binding; that stretch reads HVIYT. Over 131–154 the chain is Cytoplasmic; it reads SLDRYLAIVHATNSQRPRKLLAEK. An Important for signaling motif is present at residues 133–135; that stretch reads DRY. An involved in dimerization; when bound to chemokine region spans residues 135–147; it reads YLAIVHATNSQRP. Residues 155 to 174 form a helical membrane-spanning segment; sequence VVYVGVWIPALLLTIPDFIF. Residues 175–195 lie on the Extracellular side of the membrane; it reads ASVSEADDRYICDRFYPNDLW. Positions 186–190 are chemokine binding, important for signaling; sequence CDRFY. Positions 191 to 210 are involved in dimerization; it reads PNDLWVVVFQFQHIMVGLIL. A helical transmembrane segment spans residues 196 to 216; the sequence is VVVFQFQHIMVGLILPGIVIL. The Cytoplasmic segment spans residues 217-241; the sequence is SCYCIIISKLSHSKGHQKRKALKTT. The helical transmembrane segment at 242–261 threads the bilayer; it reads VILILAFFACWLPYYIGISI. At 262 to 282 the chain is on the extracellular side; it reads DSFILLEIIKQGCEFENTVHK. The segment at 266–268 is involved in dimerization; that stretch reads LLE. Residues 283 to 302 traverse the membrane as a helical segment; that stretch reads WISITEALAFFHCCLNPILY. Residues 303–352 lie on the Cytoplasmic side of the membrane; that stretch reads AFLGAKFKTSAQHALTSVSRGSSLKILSKGKRGGHSSVSTESESSSFHSS. Ser319 and Ser321 each carry phosphoserine. Phosphoserine; by PKC and GRK6 occurs at positions 324 and 325. A disordered region spans residues 329-352; sequence LSKGKRGGHSSVSTESESSSFHSS. Position 330 is a phosphoserine; by GRK6 (Ser330). Lys331 participates in a covalent cross-link: Glycyl lysine isopeptide (Lys-Gly) (interchain with G-Cter in ubiquitin). The span at 337-352 shows a compositional bias: low complexity; sequence HSSVSTESESSSFHSS. Ser339 is subject to Phosphoserine; by GRK6. Residues Ser348 and Ser351 each carry the phosphoserine modification.

It belongs to the G-protein coupled receptor 1 family. Monomer. Can form homodimers. Interacts with CD164. Interacts with ARRB2; the interaction is dependent on the C-terminal phosphorylation of CXCR4 and allows activation of MAPK1 and MAPK3. Interacts with ARR3; the interaction is dependent on the C-terminal phosphorylation of CXCR4 and modulates calcium mobilization. Interacts with RNF113A; the interaction, enhanced by CXCL12, promotes CXCR4 ubiquitination and subsequent degradation. Interacts (via the cytoplasmic C-terminal) with ITCH (via the WW domains I and II); the interaction, enhanced by CXCL12, promotes CXCR4 ubiquitination and leads to its degradation. Interacts with extracellular ubiquitin. Interacts with DBN1; this interaction is enhanced by antigenic stimulation. Following LPS binding, may form a complex with GDF5, HSP90AA1 and HSPA8. Phosphorylated on agonist stimulation. Rapidly phosphorylated on serine and threonine residues in the C-terminal. Phosphorylation at Ser-324 and Ser-325 leads to recruitment of ITCH, ubiquitination and protein degradation. In terms of processing, ubiquitinated after ligand binding, leading to its degradation. Ubiquitinated by ITCH at the cell membrane on agonist stimulation. The ubiquitin-dependent mechanism, endosomal sorting complex required for transport (ESCRT), then targets CXCR4 for lysosomal degradation. This process is dependent also on prior Ser-/Thr-phosphorylation in the C-terminal of CXCR4. Also binding of ARRB1 to STAM negatively regulates CXCR4 sorting to lysosomes though modulating ubiquitination of SFR5S. Post-translationally, sulfation is required for efficient binding of CXCL12/SDF-1alpha and promotes its dimerization. O- and N-glycosylated. N-glycosylation can mask coreceptor function. The O-glycosylation chondroitin sulfate attachment does not affect interaction with CXCL12/SDF-1alpha nor its coreceptor activity.

The protein localises to the cell membrane. It localises to the cell junction. The protein resides in the early endosome. Its subcellular location is the late endosome. It is found in the lysosome. Receptor for the C-X-C chemokine CXCL12/SDF-1 that transduces a signal by increasing intracellular calcium ion levels and enhancing MAPK1/MAPK3 activation. Involved in the AKT signaling cascade. Plays a role in regulation of cell migration, e.g. during wound healing. Acts as a receptor for extracellular ubiquitin; leading to enhanced intracellular calcium ions and reduced cellular cAMP levels. Binds bacterial lipopolysaccharide (LPS) et mediates LPS-induced inflammatory response, including TNF secretion by monocytes. Involved in hematopoiesis and in cardiac ventricular septum formation. Also plays an essential role in vascularization of the gastrointestinal tract, probably by regulating vascular branching and/or remodeling processes in endothelial cells. Involved in cerebellar development. In the CNS, could mediate hippocampal-neuron survival. This is C-X-C chemokine receptor type 4 (CXCR4) from Papio anubis (Olive baboon).